A 397-amino-acid chain; its full sequence is Phosphoglycerate kinase (397 aa).

Residues 21–23 (DFN), Arg36, 59–62 (HLGR), Arg118, and Arg151 each bind substrate. ATP-binding positions include Lys202, Gly293, Glu324, and 353–356 (GGDS).

Belongs to the phosphoglycerate kinase family. Monomer.

Its subcellular location is the cytoplasm. It catalyses the reaction (2R)-3-phosphoglycerate + ATP = (2R)-3-phospho-glyceroyl phosphate + ADP. The protein operates within carbohydrate degradation; glycolysis; pyruvate from D-glyceraldehyde 3-phosphate: step 2/5. In Chloroherpeton thalassium (strain ATCC 35110 / GB-78), this protein is Phosphoglycerate kinase.